The primary structure comprises 137 residues: Global transcriptional regulator Spx (137 aa).

Cys10 and Cys13 are oxidised to a cystine.

The protein belongs to the ArsC family. Spx subfamily. In terms of assembly, interacts with the C-terminal domain of the alpha subunit of the RNAP.

It localises to the cytoplasm. Global transcriptional regulator that plays a key role in stress response and exerts either positive or negative regulation of genes. Acts by interacting with the C-terminal domain of the alpha subunit of the RNA polymerase (RNAP). This interaction can enhance binding of RNAP to the promoter region of target genes and stimulate their transcription, or block interaction of RNAP with activator. The chain is Global transcriptional regulator Spx from Streptococcus mutans serotype c (strain ATCC 700610 / UA159).